Here is a 625-residue protein sequence, read N- to C-terminus: Branchpoint-bridging protein (625 aa).

Residues 1-16 (MSWRSNAQRTGMNAQP) are compositionally biased toward polar residues. 2 disordered regions span residues 1 to 154 (MSWR…AIGA) and 177 to 206 (LRSG…RTNT). The span at 22-31 (RWGGAGGAGE) shows a compositional bias: gly residues. Low complexity-rich tracts occupy residues 32–61 (GPSS…SQPY), 70–91 (SSSS…AVAA), and 110–130 (SYAA…GADA). The span at 177–190 (LRSGDFVPPDRERS) shows a compositional bias: basic and acidic residues. Positions 253-330 (YLPIKEFPEI…ASVKKCIKLI (78 aa)) constitute a KH domain. 2 consecutive CCHC-type zinc fingers follow at residues 368–385 (QLCK…ECPE) and 393–410 (IICH…DCTQ). A disordered region spans residues 466–533 (GPDGKKIPPW…HAYHQQQQAY (68 aa)). A compositionally biased stretch (gly residues) spans 488–503 (APRGGDAGRGGWGHRG). Residues 516-533 (QHQQQQHPHAYHQQQQAY) are compositionally biased toward low complexity.

It belongs to the BBP/SF1 family.

It is found in the nucleus. Functionally, necessary for the splicing of pre-mRNA. Has a role in the recognition of the branch site (5'-UACUAAC-3'), the pyrimidine tract and the 3'-splice site at the 3'-end of introns. This Mycosarcoma maydis (Corn smut fungus) protein is Branchpoint-bridging protein (BBP).